The chain runs to 156 residues: Small ribosomal subunit protein uS7 (156 aa).

It belongs to the universal ribosomal protein uS7 family. In terms of assembly, part of the 30S ribosomal subunit. Contacts proteins S9 and S11.

Functionally, one of the primary rRNA binding proteins, it binds directly to 16S rRNA where it nucleates assembly of the head domain of the 30S subunit. Is located at the subunit interface close to the decoding center, probably blocks exit of the E-site tRNA. This is Small ribosomal subunit protein uS7 from Psychromonas ingrahamii (strain DSM 17664 / CCUG 51855 / 37).